A 551-amino-acid polypeptide reads, in one-letter code: MCDMGGLDNLIANTAYLQARKNSEGDVKELQKRRKSLSLPSTDVSRKEIKETITLDYQSICVEQPIGQRLFRDFLGTVSEYKLAEEFLEEVKEWELEEGSAKEQLMEKLVSRRFKEPAEGSLNFLGKDLSSRIQQAQSKDMPELILLAKDAGNAFLMDAPFQDFQNSPFYDRFLQWKAFERQPINQKYFYEFRILGKGGFGEVCAIQVKNTGQMYACKKLDKKRLKKKNGEKMALLEKEILEKVHSPFIVSLAYAYETKTHLCLVMSLMNGGDLKFHIYNIGEKGIEIKRVIFYSAQICCGILHLHSLKILYRDMKPENVLLDDNGNCRLSDLGLAVKVKEGKPITQRAGTNGYMAPEILTDVDYSYPVDWFAMGCSIYEMIAGHTPFRDPKEKTSKEEVKRKTIEDEVVFQHPVFTEEAKDICRLFLAKKPQNRLGSRTNDDDPRKHAFFKSINFQRLEAGMVDPPFVPDPSVVYAKDISDIADFSEVKGIEFDDKDSKFFKRFATGAIPISWQKEIIDTGLFDELNDPSREATGGGGNSGEKSGVCSIL.

Serine 36 carries the phosphoserine modification. The RGS domain occupies 57–174 (YQSICVEQPI…QNSPFYDRFL (118 aa)). The 263-residue stretch at 189 to 451 (FYEFRILGKG…DDDPRKHAFF (263 aa)) folds into the Protein kinase domain. ATP-binding positions include 195-203 (LGKGGFGEV) and lysine 218. The active-site Proton acceptor is aspartate 314. The 66-residue stretch at 452–517 (KSINFQRLEA…GAIPISWQKE (66 aa)) folds into the AGC-kinase C-terminal domain. Serine 487 carries the post-translational modification Phosphoserine. The interval 529-551 (DPSREATGGGGNSGEKSGVCSIL) is disordered. Residues 542–551 (GEKSGVCSIL) show a composition bias toward low complexity. Cysteine 548 is modified (cysteine methyl ester). A lipid anchor (S-geranylgeranyl cysteine) is attached at cysteine 548. Positions 549-551 (SIL) are cleaved as a propeptide — removed in mature form.

It belongs to the protein kinase superfamily. AGC Ser/Thr protein kinase family. GPRK subfamily. Post-translationally, autophosphorylated in vitro at Ser-487. Phosphorylation at Ser-36 is regulated by light and activated by cAMP.

The protein resides in the membrane. It carries out the reaction L-threonyl-[rhodopsin] + ATP = O-phospho-L-threonyl-[rhodopsin] + ADP + H(+). The catalysed reaction is L-seryl-[rhodopsin] + ATP = O-phospho-L-seryl-[rhodopsin] + ADP + H(+). Retina-specific kinase involved in the shutoff of the photoresponse and adaptation to changing light conditions via cone opsin phosphorylation, including rhodopsin (RHO). This is Rhodopsin kinase grk7-a (grk7-a) from Xenopus laevis (African clawed frog).